Here is a 733-residue protein sequence, read N- to C-terminus: Sulfate transporter (733 aa).

Over residues 1 to 18 (MSLKNEEQNDLSPKDSVK) the composition is skewed to basic and acidic residues. The disordered stretch occupies residues 1-37 (MSLKNEEQNDLSPKDSVKGNDQYRAPSGIHLEREEES). Residues S12 and S16 each carry the phosphoserine modification. A run of 2 helical transmembrane segments spans residues 113–133 (VMSG…YSLL) and 138–158 (PIYG…LGTS). A glycan (N-linked (GlcNAc...) asparagine) is linked at N194. Transmembrane regions (helical) follow at residues 214-234 (IIVG…MGFF), 237-257 (GFVS…GASF), 379-399 (IDAI…SEMF), 415-435 (AIGF…SAAL), 453-473 (VMTA…FFSL), and 519-539 (LIST…CVIL). The region spanning 563–714 (AYKNLQAKSG…SVYEAMTFAE (152 aa)) is the STAS domain.

Belongs to the SLC26A/SulP transporter (TC 2.A.53) family. In terms of processing, N-glycosylated.

The protein resides in the cell membrane. It is found in the apical cell membrane. The catalysed reaction is oxalate(in) + sulfate(out) = oxalate(out) + sulfate(in). It carries out the reaction sulfate(out) + 2 chloride(in) = sulfate(in) + 2 chloride(out). The enzyme catalyses oxalate(out) + 2 chloride(in) = oxalate(in) + 2 chloride(out). It catalyses the reaction bromide(in) + chloride(out) = bromide(out) + chloride(in). The catalysed reaction is nitrate(in) + chloride(out) = nitrate(out) + chloride(in). It carries out the reaction iodide(in) + chloride(out) = iodide(out) + chloride(in). Its function is as follows. Sulfate transporter which mediates sulfate uptake into chondrocytes in order to maintain adequate sulfation of proteoglycans which is needed for cartilage development. Mediates electroneutral anion exchange of sulfate ions for oxalate ions, sulfate and oxalate ions for chloride and/or hydroxyl ions and chloride ions for bromide, iodide and nitrate ions. The coupling of sulfate transport to both hydroxyl and chloride ions likely serves to ensure transport at both acidic pH when most sulfate uptake is mediated by sulfate-hydroxide exchange and alkaline pH when most sulfate uptake is mediated by sulfate-chloride exchange. Essential for chondrocyte proliferation, differentiation and cell size expansion. In Bubalus bubalis (Domestic water buffalo), this protein is Sulfate transporter (SLC26A2).